A 283-amino-acid chain; its full sequence is Dihydropteroate synthase (283 aa).

Positions P18 to K274 constitute a Pterin-binding domain. Residue N25 participates in Mg(2+) binding. (7,8-dihydropterin-6-yl)methyl diphosphate contacts are provided by residues T66, D99, N119, D190, K227, and R262 to H264.

Belongs to the DHPS family. In terms of assembly, homodimer. Mg(2+) serves as cofactor.

The catalysed reaction is (7,8-dihydropterin-6-yl)methyl diphosphate + 4-aminobenzoate = 7,8-dihydropteroate + diphosphate. It functions in the pathway cofactor biosynthesis; tetrahydrofolate biosynthesis; 7,8-dihydrofolate from 2-amino-4-hydroxy-6-hydroxymethyl-7,8-dihydropteridine diphosphate and 4-aminobenzoate: step 1/2. Its function is as follows. Catalyzes the condensation of para-aminobenzoate (pABA) with 6-hydroxymethyl-7,8-dihydropterin diphosphate (DHPt-PP) to form 7,8-dihydropteroate (H2Pte), the immediate precursor of folate derivatives. This chain is Dihydropteroate synthase (folP), found in Neisseria meningitidis serogroup C.